The following is a 769-amino-acid chain: Spastin (769 aa).

The segment at 1–100 (MVRTKNQSSS…TSGNVPRGGQ (100 aa)) is disordered. Over 1–113 (MVRTKNQSSS…KQNLYVVSFP (113 aa)) the chain is Cytoplasmic. Positions 1–201 (MVRTKNQSSS…QTLEMAASRG (201 aa)) are required for localization to punctate cytoplasmic foci. Over residues 8–19 (SSSSSASSSTKS) the composition is skewed to low complexity. Gly residues predominate over residues 24–33 (SGGGGGGGGS). Residues 54 to 63 (SSKLSSNRQR) show a composition bias toward polar residues. A compositionally biased stretch (low complexity) spans 64–78 (TTTTITTTTTTPGSS). Positions 114–134 (IIFLFNVLRSLIYQLFCIFRY) form an intramembrane region, helical. Residues 135–769 (LYGASTKVIY…WSQDYGDITI (635 aa)) are Cytoplasmic-facing. The segment at 199–769 (SRGGTGAGGY…WSQDYGDITI (571 aa)) is sufficient for interaction with microtubules and microtubule severing. One can recognise an MIT domain in the interval 224 to 299 (HRRAFEYISK…SMARDRLHFL (76 aa)). The disordered stretch occupies residues 314 to 462 (KEQPKKQLPH…NAASGSGSGA (149 aa)). Low complexity predominate over residues 334 to 344 (TTTSSGSSSSS). Polar residues-rich tracts occupy residues 395–413 (NKSQTLPRNLGSKTTSTSV) and 434–450 (QFSSGRNTPPQRSRTPI). Low complexity predominate over residues 451-462 (NNNAASGSGSGA). The interval 452–466 (NNAASGSGSGASTPL) is required for interaction with microtubules. 534–541 (GPPGNGKT) lines the ATP pocket.

It belongs to the AAA ATPase family. Spastin subfamily. In terms of assembly, homohexamer. The homohexamer is stabilized by ATP-binding. The homohexamer may adopt a ring conformation through which microtubules pass prior to being severed. Interacts with microtubules. Interacts with atl; may be involved in microtubule dynamics.

It is found in the membrane. Its subcellular location is the cytoplasm. It localises to the cytoskeleton. The protein localises to the microtubule organizing center. The protein resides in the centrosome. It is found in the chromosome. Its subcellular location is the lipid droplet. The enzyme catalyses n ATP + n H2O + a microtubule = n ADP + n phosphate + (n+1) alpha/beta tubulin heterodimers.. Functionally, ATP-dependent microtubule severing protein. Stimulates microtubule minus-end depolymerization and poleward microtubule flux in the mitotic spindle. Regulates microtubule stability in the neuromuscular junction synapse. Involved in lipid metabolism by regulating the size and distribution of lipid droplets. Involved in axon regeneration by regulating microtubule severing. The chain is Spastin from Drosophila virilis (Fruit fly).